Consider the following 241-residue polypeptide: Carboxy-S-adenosyl-L-methionine synthase (241 aa).

S-adenosyl-L-methionine is bound by residues Tyr38, 63-65 (GCS), 88-89 (DN), 116-117 (DI), Asn131, and Arg198.

It belongs to the class I-like SAM-binding methyltransferase superfamily. Cx-SAM synthase family. As to quaternary structure, homodimer.

It carries out the reaction prephenate + S-adenosyl-L-methionine = carboxy-S-adenosyl-L-methionine + 3-phenylpyruvate + H2O. Its function is as follows. Catalyzes the conversion of S-adenosyl-L-methionine (SAM) to carboxy-S-adenosyl-L-methionine (Cx-SAM). The sequence is that of Carboxy-S-adenosyl-L-methionine synthase from Mannheimia succiniciproducens (strain KCTC 0769BP / MBEL55E).